Consider the following 284-residue polypeptide: Exported repetitive protein (284 aa).

An N-terminal signal peptide occupies residues Met-1–Ala-22. Residues Ser-23–Asn-252 lie on the Extracellular side of the membrane. The tract at residues Thr-80–Gly-216 is disordered. Positions Ser-86 to Thr-110 are enriched in low complexity. 12 tandem repeats follow at residues Pro-92 to Ser-96, Pro-97 to Ser-101, Pro-102 to Ser-106, Pro-107 to Asp-111, Pro-112 to Ser-116, Pro-117 to Pro-121, Pro-144 to Asn-148, Pro-149 to Ser-153, Pro-154 to Thr-158, Pro-159 to Ser-163, Pro-164 to Asp-168, and Pro-169 to Gly-173. A 6 X 5 AA tandem repeats of P-[GA]-L-T-S region spans residues Pro-92–Pro-121. Residues Pro-144–Gly-173 are 6 X 5 AA approximate tandem repeats of P-[ATG]-[LG]-X-X. Over residues Ala-145–Thr-165 the composition is skewed to polar residues. Residues Gly-202–Ser-212 are compositionally biased toward low complexity. A helical transmembrane segment spans residues Gly-253–Val-273. Over Pro-274–Ala-284 the chain is Cytoplasmic.

It to M.leprae 28 kDa antigen.

The protein resides in the cell membrane. Surface-exposed protein required for multiplication and intracellular growth. The chain is Exported repetitive protein (erp) from Mycobacterium bovis (strain ATCC BAA-935 / AF2122/97).